The sequence spans 20 residues: Glutathione S-transferase 2 (20 aa).

Residues glycine 1–leucine 20 form the GST N-terminal domain. Tyrosine 6 provides a ligand contact to glutathione.

This sequence belongs to the GST superfamily. Sigma family.

It catalyses the reaction RX + glutathione = an S-substituted glutathione + a halide anion + H(+). In terms of biological role, conjugation of reduced glutathione to a wide number of exogenous and endogenous hydrophobic electrophiles. The protein is Glutathione S-transferase 2 (GST2) of Ascaris suum (Pig roundworm).